Here is a 507-residue protein sequence, read N- to C-terminus: Phosphoprotein (507 aa).

The interval 1–48 is interaction with N0; sequence MAEEQARHVKNGLECIRALKAEPIGSLAIEEAMAAWSEISDNPGQERA. Disordered regions lie at residues 41–99, 134–163, 201–231, and 250–273; these read DNPG…PPRN, GLDGDSTLSGGDNESENSDVDIGEPDTEGY, NNFPKLGKTLNVPPPPDPGRASTSGTPIKKG, and GATQCARKSPSEPSGPGAPAGNVP. Serine 86 is modified (phosphoserine). A compositionally biased stretch (low complexity) spans 134–145; the sequence is GLDGDSTLSGGD. Residues 146-160 are compositionally biased toward acidic residues; sequence NESENSDVDIGEPDT. Residue serine 151 is modified to Phosphoserine. Over residues 260–270 the composition is skewed to low complexity; that stretch reads SEPSGPGAPAG. Residues 304–376 are multimerization; it reads GDYYDDELFS…LSSIMIAIPG (73 aa). Interaction with the L polymerase regions lie at residues 361 to 377 and 396 to 410; these read STLEGHLSSIMIAIPGL and PIIGRDSGRALAEVL. Positions 457-507 are x domain (XD); sequence GPASRSVIRSIIKSSRLEEDRKRYLMTLLDDIKGANDLAKFHQMLMKIIMK. Residues 459–507 form an interaction with the nucleocapsid (N-RNA) region; the sequence is ASRSVIRSIIKSSRLEEDRKRYLMTLLDDIKGANDLAKFHQMLMKIIMK.

It belongs to the morbillivirus P protein family. As to quaternary structure, homotetramer. Interacts (via multimerization domain and XD domain) with polymerase L; this interaction forms the polymerase L-P complex. Interacts (via N-terminus) with N0 (via Ncore); this interaction allows P to chaperon N0 to avoid N polymerization and non-specific RNA binding before encapsidation. Interacts (via C-terminus) with N-RNA template (via Ntail); this interaction maintains the P/L complex anchored to the nucleocapsid template during the sequential transcription. Interacts (via C-terminus) with protein C this interaction allows C to associate with the ribonucleocapsid. Phosphorylation on serines by host CK2 is necessary for the formation of viral factories.

In terms of biological role, essential cofactor of the RNA polymerase L that plays a central role in the transcription and replication by forming the polymerase complex with RNA polymerase L and recruiting L to the genomic N-RNA template for RNA synthesis. Also plays a central role in the encapsidation of nascent RNA chains by forming the encapsidation complex with the nucleocapsid protein N (N-P complex). Acts as a chaperone for newly synthesized free N protein, so-called N0, allowing encapsidation of nascent RNA chains during replication. The nucleoprotein protein N prevents excessive phosphorylation of P, which leads to down-regulation of viral transcription/ replication. Participates, together with N, in the formation of viral factories (viroplasms), which are large inclusions in the host cytoplasm where replication takes place. The sequence is that of Phosphoprotein (P/V) from Measles virus (strain Edmonston-AIK-C vaccine) (MeV).